The sequence spans 745 residues: F-box only protein 30 (745 aa).

The TRAF-type zinc-finger motif lies at 48–109; the sequence is EHRLLCPFER…SYADRKSYEN (62 aa). Disordered regions lie at residues 211–231 and 305–324; these read NTSV…LEDQ and GDSK…SDGT. The segment covering 222–231 has biased composition (basic and acidic residues); the sequence is QNARESLEDQ. Residues 305-314 show a composition bias toward polar residues; sequence GDSKQSNLTN. An F-box domain is found at 610 to 658; it reads NDHLSSLPFEVLQHIAGFLDGFSLCQLSCVSKLMRDVCGSLLQSRGMVI.

As to quaternary structure, part of a SCF (SKP1-cullin-F-box) protein ligase complex. Interacts with SKP1, CUL1 and RBX1/ROC1. In terms of processing, auto-ubiquitinated. Post-translationally, may be neddylated. Neddylation may be required for E3 ligase activity.

It participates in protein modification; protein ubiquitination. In terms of biological role, substrate-recognition component of the SCF (SKP1-CUL1-F-box protein)-type E3 ubiquitin ligase complex. Required for muscle atrophy following denervation. This is F-box only protein 30 (FBXO30) from Homo sapiens (Human).